The chain runs to 131 residues: Small ribosomal subunit protein uS8 (131 aa).

Belongs to the universal ribosomal protein uS8 family. In terms of assembly, part of the 30S ribosomal subunit. Contacts proteins S5 and S12.

One of the primary rRNA binding proteins, it binds directly to 16S rRNA central domain where it helps coordinate assembly of the platform of the 30S subunit. The chain is Small ribosomal subunit protein uS8 from Ralstonia pickettii (strain 12J).